The following is a 28-amino-acid chain: Truncated protein OPG079 (28 aa).

It belongs to the orthopoxvirus OPG079 family. In terms of assembly, homoomultimer (Potential). Interacts with the small subunit of ribonucleotide reductase. Interacts with host FAM111A; this interaction protomtes OPG079 degradation through autophagy.

It localises to the host cytoplasm. In terms of biological role, plays an essential role in viral DNA replication. Binds to ssDNA with high affinity and localizes to cytoplasmic factories where nascent viral genomes accumulate. May disrupt loops, hairpins and other secondary structures present on ssDNA to reduce and eliminate pausing of viral DNA polymerase at specific sites during elongation. In Vaccinia virus (strain L-IVP) (VACV), this protein is Truncated protein OPG079 (OPG079).